Consider the following 547-residue polypeptide: Cytochrome P450 monooxygenase 81 (547 aa).

The next 2 membrane-spanning stretches (helical) occupy residues 6-23 and 106-124; these read IPTQ…LFLL and AFFA…ATAG. A heme-binding site is contributed by cysteine 483. Asparagine 503 and asparagine 516 each carry an N-linked (GlcNAc...) asparagine glycan.

This sequence belongs to the cytochrome P450 family. It depends on heme as a cofactor.

The protein localises to the membrane. It participates in secondary metabolite biosynthesis. Functionally, cytochrome P450 monooxygenase that is able to use dehydroabietic acid as a substrate for oxidation. In Postia placenta (strain ATCC 44394 / Madison 698-R) (Brown rot fungus), this protein is Cytochrome P450 monooxygenase 81.